The following is a 118-amino-acid chain: Ribonuclease P protein component (118 aa).

This sequence belongs to the RnpA family. Consists of a catalytic RNA component (M1 or rnpB) and a protein subunit.

The catalysed reaction is Endonucleolytic cleavage of RNA, removing 5'-extranucleotides from tRNA precursor.. RNaseP catalyzes the removal of the 5'-leader sequence from pre-tRNA to produce the mature 5'-terminus. It can also cleave other RNA substrates such as 4.5S RNA. The protein component plays an auxiliary but essential role in vivo by binding to the 5'-leader sequence and broadening the substrate specificity of the ribozyme. The polypeptide is Ribonuclease P protein component (Desulfatibacillum aliphaticivorans).